Consider the following 777-residue polypeptide: Serine/threonine-protein kinase PLK4 (777 aa).

In terms of domain architecture, Protein kinase spans 14–268 (YEVQHLLGKG…LEQVLRHPFL (255 aa)). Residues 20–28 (LGKGGFASV) and K43 each bind ATP. Catalysis depends on D139, which acts as the Proton acceptor. Over residues 371 to 381 (TNNLAPFTSDS) the composition is skewed to polar residues. The tract at residues 371–390 (TNNLAPFTSDSDMIPSPVGE) is disordered. One can recognise a Cryptic POLO box 1 (CPB1) domain in the interval 390 to 507 (EKRLLMPPLE…ARFVGLVKSK (118 aa)). The region spanning 508 to 611 (TPKITFFSSL…GRRPAADMHA (104 aa)) is the Cryptic POLO box 2 (CPB2) domain. In terms of domain architecture, POLO box spans 669–748 (PIKRITVPEI…MPQLQMKLKC (80 aa)).

This sequence belongs to the protein kinase superfamily. Ser/Thr protein kinase family. CDC5/Polo subfamily. Homodimer. Post-translationally, ubiquitinated by the SCF(Slimb) ubiquitin ligase complex; leading to its degradation by the proteasome during interphase and regulating centriole number and ensuring the block to centriole reduplication.

The protein localises to the cytoplasm. It localises to the cytoskeleton. Its subcellular location is the microtubule organizing center. It is found in the centrosome. The protein resides in the centriole. It catalyses the reaction L-seryl-[protein] + ATP = O-phospho-L-seryl-[protein] + ADP + H(+). It carries out the reaction L-threonyl-[protein] + ATP = O-phospho-L-threonyl-[protein] + ADP + H(+). Serine/threonine-protein kinase that plays a central role in centriole duplication. Able to trigger procentriole formation on the surface of the mother centriole cylinder, using mother centriole as a platform, leading to the recruitment of centriole biogenesis proteins such as sas-6. When overexpressed, it is able to induce centrosome amplification through the simultaneous generation of multiple procentrioles adjoining each parental centriole during S phase. Centrosome amplification following overexpression can initiate tumorigenesis, highlighting the importance of centrosome regulation in cancers. The polypeptide is Serine/threonine-protein kinase PLK4 (SAK) (Drosophila pseudoobscura pseudoobscura (Fruit fly)).